Here is a 106-residue protein sequence, read N- to C-terminus: Iron-sulfur cluster assembly protein CyaY (106 aa).

It belongs to the frataxin family.

Functionally, involved in iron-sulfur (Fe-S) cluster assembly. May act as a regulator of Fe-S biogenesis. This is Iron-sulfur cluster assembly protein CyaY from Colwellia psychrerythraea (strain 34H / ATCC BAA-681) (Vibrio psychroerythus).